We begin with the raw amino-acid sequence, 1184 residues long: DNA-directed RNA polymerase subunit beta (1184 aa).

Residues 1160–1184 (DDDFTNQNDAFNIVQPENAATEKTE) form a disordered region.

Belongs to the RNA polymerase beta chain family. The RNAP catalytic core consists of 2 alpha, 1 beta, 1 beta' and 1 omega subunit. When a sigma factor is associated with the core the holoenzyme is formed, which can initiate transcription.

The enzyme catalyses RNA(n) + a ribonucleoside 5'-triphosphate = RNA(n+1) + diphosphate. Its function is as follows. DNA-dependent RNA polymerase catalyzes the transcription of DNA into RNA using the four ribonucleoside triphosphates as substrates. This chain is DNA-directed RNA polymerase subunit beta, found in Listeria innocua serovar 6a (strain ATCC BAA-680 / CLIP 11262).